The following is a 1493-amino-acid chain: Mitogen-activated protein kinase kinase kinase 1 (1493 aa).

Low complexity-rich tracts occupy residues 1–23 (MAAA…ASPE) and 33–42 (GSGAPAAGAG). Disordered regions lie at residues 1–171 (MAAA…DRPE) and 222–295 (LQGE…EETS). A2 bears the N-acetylalanine mark. A Phosphoserine modification is found at S21. Positions 84 to 94 (PPCPSTSPSPE) are enriched in pro residues. Low complexity-rich tracts occupy residues 95-108 (PADA…FQPA) and 135-151 (ARSP…APSG). S137 is subject to Phosphoserine. Residues 152–171 (REMENKETLKGLHKMDDRPE) are compositionally biased toward basic and acidic residues. Over residues 230-257 (SAAPAPKGRRSPSPGSSPSGRSGKPESP) the composition is skewed to low complexity. Position 265 is a phosphoserine (S265). At T275 the chain carries Phosphothreonine. S282, S287, and S290 each carry phosphoserine. The segment at 328–356 (YRVFIGPQNCSCGRGTFCIHLLFVMLRVF) adopts an SWIM-type zinc-finger fold. The RING-type zinc finger occupies 433–482 (CPICLLGMLDEESLTVCEDGCRNKLHHHCMSIWAEECRRNREPLICPLCR). Polar residues predominate over residues 496–506 (SSPVDSPTSLR). Disordered regions lie at residues 496–524 (SSPV…SQRR), 866–910 (DTLD…LSAS), 923–955 (VGLP…SPLS), and 992–1060 (PCKI…ASKN). S497, S521, and S910 each carry phosphoserine. The segment covering 507–522 (GVQQPSSPQQPVAGSQ) has biased composition (low complexity). 2 stretches are compositionally biased toward polar residues: residues 925–940 (LPSS…TVQT) and 998–1014 (ASPQ…QRTC). S999 and S1024 each carry phosphoserine. Residues 1049–1060 (GSTSKLGDASKN) are compositionally biased toward polar residues. The region spanning 1224-1489 (WLKGQQIGLG…SRELLKHPVF (266 aa)) is the Protein kinase domain. Residues 1230–1238 (IGLGAFSSC) and K1253 each bind ATP. D1350 acts as the Proton acceptor in catalysis. Phosphothreonine; by autocatalysis occurs at positions 1381 and 1393.

Belongs to the protein kinase superfamily. STE Ser/Thr protein kinase family. MAP kinase kinase kinase subfamily. As to quaternary structure, binds both upstream activators and downstream substrates in multimolecular complexes through its N-terminus. Oligomerizes after binding MAP4K2 or TRAF2. Interacts (via the kinase catalytic domain) with STK38. Interacts with GRIPAP1. Mg(2+) serves as cofactor. In terms of processing, autophosphorylated. As to expression, most highly expressed in spleen, kidney and lung.

Its subcellular location is the membrane. It catalyses the reaction L-seryl-[protein] + ATP = O-phospho-L-seryl-[protein] + ADP + H(+). The catalysed reaction is L-threonyl-[protein] + ATP = O-phospho-L-threonyl-[protein] + ADP + H(+). Activated by autophosphorylation on Thr-1381 and Thr-1393 following oligomerization. Component of a protein kinase signal transduction cascade. Activates the ERK and JNK kinase pathways by phosphorylation of MAP2K1 and MAP2K4. May phosphorylate the MAPK8/JNK1 kinase. Activates CHUK and IKBKB, the central protein kinases of the NF-kappa-B pathway. The protein is Mitogen-activated protein kinase kinase kinase 1 (Map3k1) of Rattus norvegicus (Rat).